A 295-amino-acid polypeptide reads, in one-letter code: Manganese transport system membrane protein MntD (295 aa).

A run of 9 helical transmembrane segments spans residues 7 to 27 (IIAT…FLVL), 42 to 62 (LLGI…YMFI), 63 to 83 (GAAA…SKGV), 87 to 107 (AAIG…LSVY), 138 to 158 (IGPK…VLIS), 174 to 194 (ALAL…MLSL), 203 to 223 (VGAV…HLLT), 227 to 247 (LYML…GYFF), and 253 to 273 (VSIS…AFLF).

The protein belongs to the ABC-3 integral membrane protein family. In terms of assembly, the complex is probably composed of two ATP-binding proteins (MntB), two transmembrane proteins (MntC and MntD) and a solute-binding protein (MntA).

It is found in the cell membrane. In terms of biological role, probably part of the ABC transporter complex MntABCD involved in manganese import. Probably responsible for the translocation of the substrate across the membrane. This is Manganese transport system membrane protein MntD from Bacillus subtilis (strain 168).